The primary structure comprises 374 residues: N5-carboxyaminoimidazole ribonucleotide synthase (374 aa).

Residues R108, K148, 153 to 159, 183 to 186, E191, H214, and 266 to 267 each bind ATP; these read GYDGKGQ, EQFL, and NE. In terms of domain architecture, ATP-grasp spans 112–296; the sequence is KQTLQKAGSK…QFDTHILAVT (185 aa).

It belongs to the PurK/PurT family. In terms of assembly, homodimer.

The catalysed reaction is 5-amino-1-(5-phospho-beta-D-ribosyl)imidazole + hydrogencarbonate + ATP = 5-carboxyamino-1-(5-phospho-D-ribosyl)imidazole + ADP + phosphate + 2 H(+). It participates in purine metabolism; IMP biosynthesis via de novo pathway; 5-amino-1-(5-phospho-D-ribosyl)imidazole-4-carboxylate from 5-amino-1-(5-phospho-D-ribosyl)imidazole (N5-CAIR route): step 1/2. Its function is as follows. Catalyzes the ATP-dependent conversion of 5-aminoimidazole ribonucleotide (AIR) and HCO(3)(-) to N5-carboxyaminoimidazole ribonucleotide (N5-CAIR). The sequence is that of N5-carboxyaminoimidazole ribonucleotide synthase from Staphylococcus haemolyticus (strain JCSC1435).